Here is a 315-residue protein sequence, read N- to C-terminus: T-box transcription factor tbx-8 (315 aa).

The segment at residues 11–195 (EDQDKLWNLF…FNPFAKGFRE (185 aa)) is a DNA-binding region (T-box). Over residues 193 to 203 (FREGSQSDRKR) the composition is skewed to basic and acidic residues. 2 disordered regions span residues 193–235 (FREG…SVSP) and 293–315 (PPPSLKNVKKEEQEDIEQEINVV). Residues 205 to 225 (SPSADDSTTDESSSQVSSPQP) show a composition bias toward low complexity. The segment covering 305–315 (QEDIEQEINVV) has biased composition (acidic residues).

It is found in the nucleus. Functionally, transcription factor. Involved in the control of early morphogenesis of the intestine, hypodermis and body-wall muscle. Involved in regulating expression of vab-7. Appears to have partially redundant function to tbx-9. This Caenorhabditis elegans protein is T-box transcription factor tbx-8 (tbx-8).